Reading from the N-terminus, the 664-residue chain is Glycine--tRNA ligase beta subunit (664 aa).

This sequence belongs to the class-II aminoacyl-tRNA synthetase family. In terms of assembly, tetramer of two alpha and two beta subunits.

The protein localises to the cytoplasm. The enzyme catalyses tRNA(Gly) + glycine + ATP = glycyl-tRNA(Gly) + AMP + diphosphate. The protein is Glycine--tRNA ligase beta subunit of Rickettsia typhi (strain ATCC VR-144 / Wilmington).